Reading from the N-terminus, the 259-residue chain is Small ribosomal subunit protein uS2 (259 aa).

The tract at residues 224 to 259 is disordered; that stretch reads GKQGEDDQQVAPAEDVAEEVSDESLQDLKNSVEGND. Over residues 238–248 the composition is skewed to acidic residues; sequence DVAEEVSDESL. Residues 250–259 are compositionally biased toward polar residues; the sequence is DLKNSVEGND.

Belongs to the universal ribosomal protein uS2 family.

In Limosilactobacillus fermentum (strain NBRC 3956 / LMG 18251) (Lactobacillus fermentum), this protein is Small ribosomal subunit protein uS2.